A 419-amino-acid chain; its full sequence is 3-isopropylmalate dehydratase large subunit (419 aa).

Cysteine 300, cysteine 360, and cysteine 363 together coordinate [4Fe-4S] cluster.

Belongs to the aconitase/IPM isomerase family. LeuC type 2 subfamily. As to quaternary structure, heterodimer of LeuC and LeuD. The cofactor is [4Fe-4S] cluster.

The enzyme catalyses (2R,3S)-3-isopropylmalate = (2S)-2-isopropylmalate. Its pathway is amino-acid biosynthesis; L-leucine biosynthesis; L-leucine from 3-methyl-2-oxobutanoate: step 2/4. In terms of biological role, catalyzes the isomerization between 2-isopropylmalate and 3-isopropylmalate, via the formation of 2-isopropylmaleate. This is 3-isopropylmalate dehydratase large subunit from Clostridium beijerinckii (strain ATCC 51743 / NCIMB 8052) (Clostridium acetobutylicum).